A 457-amino-acid polypeptide reads, in one-letter code: PDZ and LIM domain protein 7 (457 aa).

The 85-residue stretch at 1–85 (MDSFKVVLEG…RLSLGLSRAQ (85 aa)) folds into the PDZ domain. Serine 78 is modified (phosphoserine). Disordered regions lie at residues 82-166 (SRAQ…QSRS) and 186-226 (FMKK…PWAV). Residue threonine 96 is modified to Phosphothreonine. Arginine 103 is modified (asymmetric dimethylarginine). Position 111 is a phosphoserine (serine 111). Over residues 126–135 (DSTLRQNGQL) the composition is skewed to polar residues. Over residues 144-157 (SKQRLMEDTEDWRP) the composition is skewed to basic and acidic residues. Serine 247 bears the Phosphoserine mark. 3 consecutive LIM zinc-binding domains span residues 280–338 (PVCH…VRYA), 339–398 (PNCA…MFGT), and 399–457 (KCRG…FSHV).

In terms of assembly, specifically binds via its LIM zinc-binding 3 domain (LIM 3) domain to endocytic codes of INSR, but not with those of IGF1R, LDLR, TFRC, or EGFR. Interacts with various PKC isoforms through the LIM zinc-binding domains. Binds to RET in a phosphorylation-independent manner via its LIM zinc-binding domain 2 (LIM 2). Probably part of a complex with SHC and the RET dimer. Interacts with TPM2, TBX4 and TBX5.

The protein resides in the cytoplasm. It localises to the cytoskeleton. In terms of biological role, may function as a scaffold on which the coordinated assembly of proteins can occur. May play a role as an adapter that, via its PDZ domain, localizes LIM-binding proteins to actin filaments of both skeletal muscle and nonmuscle tissues. Involved in both of the two fundamental mechanisms of bone formation, direct bone formation (e.g. embryonic flat bones mandible and cranium), and endochondral bone formation (e.g. embryonic long bone development). Plays a role during fracture repair. Involved in BMP6 signaling pathway. The protein is PDZ and LIM domain protein 7 (Pdlim7) of Mus musculus (Mouse).